The following is a 395-amino-acid chain: Receptor-like cytoplasmic kinase 176 (395 aa).

The disordered stretch occupies residues 1 to 45 (MGNCWGAKISSESPCRSASSPSGGTSKYASNSSVSAASVPPTPRS). Low complexity-rich tracts occupy residues 10 to 22 (SSES…SSPS) and 29 to 39 (ASNSSVSAASV). The Protein kinase domain occupies 70-355 (FRPDSVLGEG…EQVVAVLEQL (286 aa)). ATP-binding positions include 76-84 (LGEGGFGSV) and K108. D205 (proton acceptor) is an active-site residue. The tract at residues 359–395 (KETGANPQLQKKSSSKNAGSNGSKPSSKGKPANARLV) is disordered. Low complexity predominate over residues 369 to 395 (KKSSSKNAGSNGSKPSSKGKPANARLV).

The protein belongs to the protein kinase superfamily. Ser/Thr protein kinase family. As to quaternary structure, interacts with CERK1.

The catalysed reaction is L-seryl-[protein] + ATP = O-phospho-L-seryl-[protein] + ADP + H(+). It catalyses the reaction L-threonyl-[protein] + ATP = O-phospho-L-threonyl-[protein] + ADP + H(+). In terms of biological role, functions downstream of CERK1 in the microbial peptidoglycans (PGNs) and fungal chitin signaling pathways that mediate innate immunity. Participates in the activation of defense genes during response to PGN and chitin. The chain is Receptor-like cytoplasmic kinase 176 from Oryza sativa subsp. japonica (Rice).